Reading from the N-terminus, the 345-residue chain is N-acetyl-gamma-glutamyl-phosphate reductase (345 aa).

The active site involves cysteine 149.

Belongs to the NAGSA dehydrogenase family. Type 1 subfamily.

It is found in the cytoplasm. It catalyses the reaction N-acetyl-L-glutamate 5-semialdehyde + phosphate + NADP(+) = N-acetyl-L-glutamyl 5-phosphate + NADPH + H(+). Its pathway is amino-acid biosynthesis; L-arginine biosynthesis; N(2)-acetyl-L-ornithine from L-glutamate: step 3/4. In terms of biological role, catalyzes the NADPH-dependent reduction of N-acetyl-5-glutamyl phosphate to yield N-acetyl-L-glutamate 5-semialdehyde. This Bacillus thuringiensis subsp. konkukian (strain 97-27) protein is N-acetyl-gamma-glutamyl-phosphate reductase.